A 943-amino-acid polypeptide reads, in one-letter code: MTQDYKATLHLPATDFPMRGDLPKREPAMLERWEREGLYAQVRANAAGRPLFVLHDGPPYANGQIHLGHAVNKILKDIIVKSKYLAGFDAPYIPGWDCHGLPIEIAIEKKFGKVGVKLDAAQFRQKCREYATEQIDLQRRDFKRLGVIGDWDNPYKTLDFRFEANEIRALAKVIDNGHLTRGVKPVHWCFDCGSALAEAEIEYADKVSPTVDIAYPARDPAAVAAAFGVTLSAGTQVAVPIWTTTPWTLPASLAVSLGAELDYVLVEGAADHGQPRWLVIAEALAGKALARYGVDAVVVHGHAKGAALDQLLLAHPFYAERDIPLILGDHVSDDDGTGAVHTAPGHGQEDYQVSKQYGLLERYSAAQINPIDGRGVYLPSTPPLGDTVLAGLHIWKANDVIIDALRDTGALLAASKMEHSYPHCWRHKTPIAFRATPQWFISMEQANLRADALKAIETVHWYPSWGQARIAGMIDGRPDWTISRQRTWGVPIALFVHRETGEPHPRSTELMRQVAERVEQGGVDVWYTLDAAELLGDEAGDYDKITDILDVWFDSGVTHETVLVDRGLPKPADLYLEGSDQHRGWFQSSLLTGVAMDKVAPYKQCLTHGFTVDEHGRKMSKSLGNGIEPQEIMRTLGADILRLWIASADYSNEMSLSQEILKRNADAYRRLRNTARFLLGNLHGFDPLQHLVALDDMVLLDRWIVHRAHELQEKITAAYARYDFAEIVQGLLNFCSVDLGSLYLDVTKDRLYTMAEDARGRRSAQSAMYHVAEAFVRWIAPVLSFTAEELWAYLPGEHSGNVLFATWYDGLAPMPADAALTSADVDKLLALREQVAKVLEPMRANGAIGAALEAEITVAADAQTAARWQPLSDELRFLFISGDVTVTAASTDDIFVSAQPTTKAKCVRCWHHQASVGSDPRHPELCSRCVSNIEGPGEERRWF.

The 'HIGH' region motif lies at 59–69 (PYANGQIHLGH). Glu577 is a binding site for L-isoleucyl-5'-AMP. A 'KMSKS' region motif is present at residues 618–622 (KMSKS). Lys621 is an ATP binding site. 4 residues coordinate Zn(2+): Cys906, Cys909, Cys926, and Cys929.

The protein belongs to the class-I aminoacyl-tRNA synthetase family. IleS type 1 subfamily. As to quaternary structure, monomer. Zn(2+) serves as cofactor.

It localises to the cytoplasm. It catalyses the reaction tRNA(Ile) + L-isoleucine + ATP = L-isoleucyl-tRNA(Ile) + AMP + diphosphate. In terms of biological role, catalyzes the attachment of isoleucine to tRNA(Ile). As IleRS can inadvertently accommodate and process structurally similar amino acids such as valine, to avoid such errors it has two additional distinct tRNA(Ile)-dependent editing activities. One activity is designated as 'pretransfer' editing and involves the hydrolysis of activated Val-AMP. The other activity is designated 'posttransfer' editing and involves deacylation of mischarged Val-tRNA(Ile). The chain is Isoleucine--tRNA ligase from Xanthomonas campestris pv. campestris (strain B100).